We begin with the raw amino-acid sequence, 607 residues long: Guanine nucleotide-binding protein-like 1 (607 aa).

Basic residues predominate over residues 1-14 (MPRKKPFSVKQKKK). The disordered stretch occupies residues 1-81 (MPRKKPFSVK…GPRGYDPNRY (81 aa)). Residues 15-26 (QLQDKRERKRGL) are compositionally biased toward basic and acidic residues. A phosphoserine mark is found at Ser32, Ser33, and Ser34. 2 positions are modified to phosphothreonine: Thr48 and Thr50. Phosphoserine is present on residues Ser51 and Ser68. Residues 178-418 (WRQLWRVLEM…LCDCPGLIFP (241 aa)) enclose the CP-type G domain. Residue 225–228 (NKVD) participates in GTP binding. Ser324 bears the Phosphoserine mark. GTP contacts are provided by residues 367 to 374 (GFPNVGKS) and 411 to 415 (DCPGL). The disordered stretch occupies residues 547–607 (GPAGDEEEEE…PYALLGEDEC (61 aa)). Over residues 550 to 584 (GDEEEEEEEELSSSCEEEGEEDRDADEEGEGDEDT) the composition is skewed to acidic residues. 3 positions are modified to phosphoserine: Ser561, Ser562, and Ser563.

It belongs to the TRAFAC class YlqF/YawG GTPase family.

Possible regulatory or functional link with the histocompatibility cluster. The chain is Guanine nucleotide-binding protein-like 1 (GNL1) from Pongo abelii (Sumatran orangutan).